Consider the following 517-residue polypeptide: MTSSKIEMPGEVKADPAALMASLHLLPSPTLNLEIKYTKIFINNEWQNSESGRIFPVYNPATGEQICDIQEADKVDTDKAVRAARLAFSLGSVWRRMDASERGHLLDKLADLVERDRAILATMESLNSGKPFLQAFYVDLQGVIKTLRYYAGWADKIHGMTIPVDGDYFTFTRHEPIGVCGQIIPWNFPLLMFAWKIAPALCCGNTVVIKPAEQTPLSALYMGALIKEAGFPPGVVNILPGFGPIVGAAIASHVGIDKIAFTGSTEVGKLIQEAAGRSNLKRVTLELGGKSPNIIFADADLDYAVEQAHQGVFFNQGQCCTAGSRIYVEESIYEEFVRKSVKRAKRKIVGSPFDPTTEQGPQIDKKQYNKILELIQSGITEGAKLECGGKGLGRKGFFIEPTVFSNVTDDMRIAKEEIFGPVQEILRFKTMDEVIERANNSDFGLVAAVFTNDINKALTVSSAMQAGTVWINCYNALNAQSPFGGSKSGNGREMGECGLREYSEVKTVTIKIPQENS.

Residues 184–186 (IPW), 210–213 (KPAE), and 264–266 (STE) contribute to the NAD(+) site. Glutamate 286 serves as the catalytic Proton acceptor. Cysteine 320 functions as the Nucleophile in the catalytic mechanism. NAD(+) contacts are provided by residues 366–370 (KQYNK) and glutamate 417.

Belongs to the aldehyde dehydrogenase family. In terms of assembly, homotetramer. Expressed in the high vocal center (HVC) which integrates auditory and motor activities and constitutes a nodal nucleus on the song system.

Its subcellular location is the cytoplasm. It catalyses the reaction retinal + NAD(+) + H2O = retinoate + NADH + 2 H(+). The catalysed reaction is all-trans-retinal + NAD(+) + H2O = all-trans-retinoate + NADH + 2 H(+). The enzyme catalyses all-trans-13,14-dihydroretinal + NAD(+) + H2O = all-trans-13,14-dihydroretinoate + NADH + 2 H(+). It functions in the pathway cofactor metabolism; retinol metabolism. In terms of biological role, catalyzes the NAD-dependent oxidation of aldehyde substrates, such as all-trans-retinal and all-trans-13,14-dihydroretinal, to their corresponding carboxylic acids, all-trans-retinoate and all-trans-13,14-dihydroretinoate, respectively. Retinoate signaling is critical for the transcriptional control of many genes, for instance it is crucial for initiation of meiosis in both male and female. Recognizes retinal as substrate, both in its free form and when bound to cellular retinol-binding protein. Lacks activity with benzaldehyde, acetaldehyde and octanal. Displays complete lack of activity with citral. Plays a significant role in the acquisition and production of learned songs. This chain is Retinal dehydrogenase 2 (ALDH1A2), found in Taeniopygia guttata (Zebra finch).